Reading from the N-terminus, the 204-residue chain is Octanoyltransferase (204 aa).

Positions 30–204 (CETPDEIWLL…QSFINQLTDV (175 aa)) constitute a BPL/LPL catalytic domain. Residues 69–76 (RGGQITYH), 136–138 (SLG), and 149–151 (GIA) each bind substrate. Cysteine 167 functions as the Acyl-thioester intermediate in the catalytic mechanism.

It belongs to the LipB family.

It localises to the cytoplasm. It catalyses the reaction octanoyl-[ACP] + L-lysyl-[protein] = N(6)-octanoyl-L-lysyl-[protein] + holo-[ACP] + H(+). The protein operates within protein modification; protein lipoylation via endogenous pathway; protein N(6)-(lipoyl)lysine from octanoyl-[acyl-carrier-protein]: step 1/2. Catalyzes the transfer of endogenously produced octanoic acid from octanoyl-acyl-carrier-protein onto the lipoyl domains of lipoate-dependent enzymes. Lipoyl-ACP can also act as a substrate although octanoyl-ACP is likely to be the physiological substrate. The chain is Octanoyltransferase from Nitrosomonas europaea (strain ATCC 19718 / CIP 103999 / KCTC 2705 / NBRC 14298).